Reading from the N-terminus, the 169-residue chain is S-ribosylhomocysteine lyase (169 aa).

The Fe cation site is built by H54, H58, and C128.

It belongs to the LuxS family. Homodimer. Requires Fe cation as cofactor.

The enzyme catalyses S-(5-deoxy-D-ribos-5-yl)-L-homocysteine = (S)-4,5-dihydroxypentane-2,3-dione + L-homocysteine. In terms of biological role, involved in the synthesis of autoinducer 2 (AI-2) which is secreted by bacteria and is used to communicate both the cell density and the metabolic potential of the environment. The regulation of gene expression in response to changes in cell density is called quorum sensing. Catalyzes the transformation of S-ribosylhomocysteine (RHC) to homocysteine (HC) and 4,5-dihydroxy-2,3-pentadione (DPD). This is S-ribosylhomocysteine lyase from Shewanella amazonensis (strain ATCC BAA-1098 / SB2B).